The chain runs to 320 residues: Probable NAD(P)H-dependent D-xylose reductase xyl1 (320 aa).

The Proton donor role is filled by Tyr-50. Residue His-112 participates in substrate binding. NAD(+) is bound by residues Ser-167–Asn-168, Ser-216–Glu-225, and Lys-272–Asn-282.

This sequence belongs to the aldo/keto reductase family.

The catalysed reaction is xylitol + NAD(+) = D-xylose + NADH + H(+). The enzyme catalyses xylitol + NADP(+) = D-xylose + NADPH + H(+). Its pathway is carbohydrate metabolism; D-xylose degradation. Functionally, catalyzes the initial reaction in the xylose utilization pathway by reducing D-xylose into xylitol. Xylose is a major component of hemicelluloses such as xylan. Most fungi utilize D-xylose via three enzymatic reactions, xylose reductase (XR), xylitol dehydrogenase (XDH), and xylulokinase, to form xylulose 5-phosphate, which enters pentose phosphate pathway. This is Probable NAD(P)H-dependent D-xylose reductase xyl1 (xyl1) from Aspergillus terreus (strain NIH 2624 / FGSC A1156).